The following is a 382-amino-acid chain: Beta-1,4-galactosyltransferase 6 (382 aa).

At 1-14 (MSVLRRMMRVSNRS) the chain is on the cytoplasmic side. The chain crosses the membrane as a helical; Signal-anchor for type II membrane protein span at residues 15 to 35 (LLAFIFFFSLSSSCLYFIYVA). Residues 36–382 (PGIANTYLFM…MPELAPIEDY (347 aa)) are Lumenal-facing. N-linked (GlcNAc...) asparagine glycosylation is found at asparagine 71, asparagine 75, asparagine 83, asparagine 84, asparagine 99, and asparagine 122. Cysteines 108 and 152 form a disulfide. UDP-alpha-D-galactose is bound by residues 163 to 167 (PFRNR), 202 to 204 (FNR), 229 to 230 (VD), tyrosine 258, and tryptophan 290. Cysteines 223 and 242 form a disulfide. Aspartate 230 provides a ligand contact to Mn(2+). 292 to 295 (GEDD) serves as a coordination point for N-acetyl-D-glucosamine. N-linked (GlcNAc...) asparagine glycosylation is present at asparagine 307. Residue histidine 323 participates in Mn(2+) binding. 323–324 (HH) is a UDP-alpha-D-galactose binding site. Residue arginine 334 participates in N-acetyl-D-glucosamine binding. N-linked (GlcNAc...) asparagine glycosylation occurs at asparagine 367.

Belongs to the glycosyltransferase 7 family. Mn(2+) is required as a cofactor. The cofactor is Mg(2+). In terms of tissue distribution, high expression in brain and adrenal gland, lower in liver, lung, colon and peripheral white blood cells.

It localises to the golgi apparatus. It is found in the golgi stack membrane. The catalysed reaction is a beta-D-glucosyl-(1&lt;-&gt;1')-N-acylsphing-4-enine + UDP-alpha-D-galactose = a beta-D-Gal-(1-&gt;4)-beta-D-Glc-(1&lt;-&gt;1)-Cer(d18:1(4E)) + UDP + H(+). The protein operates within protein modification; protein glycosylation. It participates in sphingolipid metabolism. Inhibited by EDTA. Functionally, catalyzes the synthesis of lactosylceramide (LacCer) via the transfer of galactose from UDP-galactose to glucosylceramide (GlcCer). LacCer is the starting point in the biosynthesis of all gangliosides (membrane-bound glycosphingolipids) which play pivotal roles in the CNS including neuronal maturation and axonal and myelin formation. This chain is Beta-1,4-galactosyltransferase 6, found in Homo sapiens (Human).